We begin with the raw amino-acid sequence, 387 residues long: MVAQEMAQEKNLQPWEYVYDLLMPAKIPPRKRTKYIYLALAVPPTMEFNKKISKGDTEDLELPVYPVAFNTRPGNNKADRIATRKDLLTRLGTYPTVGLYANDYDFTMLIKNLDFKSEFVPGYFPLAVLELHFERDITANPEDYGLKPIDGREWVFDPDGSYKVTSGSLFNIAKAEIVDPNSVTINLDKNSKEFNALNGYGVVQFYIDLNNAPWEAYAKAAEECESVGGIYRHDTNEGPSYCTLPLNKEANIKASEFILQLYDMIKSKIASEDFLKREMTFLAPGPKQIEDFLKNEMMYQPPGPKRIPVKPVIGKTFQEMVKVAEQEMAKVAEKRDLILGGEEKEPKQKSQEKLFNPFAIDYEMLTEEQQQQNETEEEEKNNTVKLS.

Positions 315–387 (KTFQEMVKVA…EEKNNTVKLS (73 aa)) form a coiled coil. The interval 365–387 (LTEEQQQQNETEEEEKNNTVKLS) is disordered.

Its subcellular location is the virion. This chain is Structural protein ORF387, found in Acidianus convivator (ATV).